A 531-amino-acid chain; its full sequence is Squalene epoxidase 1 (531 aa).

Residues I9 to V29 traverse the membrane as a helical segment. FAD is bound by residues V70 to A71, E90 to R91, R98, R169, V185, D347, and M360. Transmembrane regions (helical) follow at residues L458–P478 and I483–A503.

Belongs to the squalene monooxygenase family. It depends on FAD as a cofactor. Expressed in seedlings, leaves, stems, inflorescences, sepals, style and siliques. Expressed in expanded cotyledons, root tips and cortical cells of the root elongation zone, but not in root hair cells. In leaves, expressed in most cells, with a very strong expression in stomata.

Its subcellular location is the membrane. It catalyses the reaction squalene + reduced [NADPH--hemoprotein reductase] + O2 = (S)-2,3-epoxysqualene + oxidized [NADPH--hemoprotein reductase] + H2O + H(+). The protein operates within terpene metabolism; lanosterol biosynthesis; lanosterol from farnesyl diphosphate: step 2/3. Its function is as follows. Catalyzes the stereospecific oxidation of squalene to (S)-2,3-epoxysqualene, and is considered to be a rate-limiting enzyme in steroid biosynthesis. Can produce not only oxidosqualene, but also 2,3:22,23-dioxidosqualene. Main squalene epoxidase in the root. Sqe1 mutants may show defects in membrane lipid rafts, impairing the correct localization of RHD2 NADPH oxidase and the proper polarized production of ROS. In Arabidopsis thaliana (Mouse-ear cress), this protein is Squalene epoxidase 1 (SQE1).